The primary structure comprises 37 residues: Large ribosomal subunit protein bL36 (37 aa).

It belongs to the bacterial ribosomal protein bL36 family.

This Synechococcus sp. (strain RCC307) protein is Large ribosomal subunit protein bL36.